Consider the following 279-residue polypeptide: Thymidylate synthase (279 aa).

133 to 134 (RR) serves as a coordination point for dUMP. The active-site Nucleophile is Cys154. DUMP contacts are provided by residues 178 to 181 (RSND), Asn189, and 219 to 221 (HIY). Position 181 (Asp181) interacts with (6R)-5,10-methylene-5,6,7,8-tetrahydrofolate. Ala278 contributes to the (6R)-5,10-methylene-5,6,7,8-tetrahydrofolate binding site.

This sequence belongs to the thymidylate synthase family. Bacterial-type ThyA subfamily. In terms of assembly, homodimer.

The protein localises to the cytoplasm. The catalysed reaction is dUMP + (6R)-5,10-methylene-5,6,7,8-tetrahydrofolate = 7,8-dihydrofolate + dTMP. Its pathway is pyrimidine metabolism; dTTP biosynthesis. Its function is as follows. Catalyzes the reductive methylation of 2'-deoxyuridine-5'-monophosphate (dUMP) to 2'-deoxythymidine-5'-monophosphate (dTMP) while utilizing 5,10-methylenetetrahydrofolate (mTHF) as the methyl donor and reductant in the reaction, yielding dihydrofolate (DHF) as a by-product. This enzymatic reaction provides an intracellular de novo source of dTMP, an essential precursor for DNA biosynthesis. This Streptococcus pyogenes serotype M3 (strain SSI-1) protein is Thymidylate synthase.